Consider the following 204-residue polypeptide: Protein LURP-one-related 14 (204 aa).

It belongs to the LOR family.

Its function is as follows. Might be related to the phospholipid scramblase and tubby-like superfamily of membrane tethered transcription factors. This chain is Protein LURP-one-related 14, found in Arabidopsis thaliana (Mouse-ear cress).